The following is a 236-amino-acid chain: UPF0257 lipoprotein YnfC (236 aa).

The N-terminal stretch at 1-16 (MKYKLLPCLLAILLTG) is a signal peptide. A lipid anchor (N-palmitoyl cysteine) is attached at Cys17. The S-diacylglycerol cysteine moiety is linked to residue Cys17.

It belongs to the UPF0257 family.

It localises to the cell membrane. This chain is UPF0257 lipoprotein YnfC, found in Escherichia coli O45:K1 (strain S88 / ExPEC).